The following is a 272-amino-acid chain: 2-dehydro-3-deoxyphosphooctonate aldolase (272 aa).

This sequence belongs to the KdsA family.

Its subcellular location is the cytoplasm. The enzyme catalyses D-arabinose 5-phosphate + phosphoenolpyruvate + H2O = 3-deoxy-alpha-D-manno-2-octulosonate-8-phosphate + phosphate. It functions in the pathway carbohydrate biosynthesis; 3-deoxy-D-manno-octulosonate biosynthesis; 3-deoxy-D-manno-octulosonate from D-ribulose 5-phosphate: step 2/3. It participates in bacterial outer membrane biogenesis; lipopolysaccharide biosynthesis. The sequence is that of 2-dehydro-3-deoxyphosphooctonate aldolase from Pelobacter propionicus (strain DSM 2379 / NBRC 103807 / OttBd1).